The chain runs to 487 residues: Argininosuccinate lyase (487 aa).

This sequence belongs to the lyase 1 family. Argininosuccinate lyase subfamily.

The protein resides in the cytoplasm. The enzyme catalyses 2-(N(omega)-L-arginino)succinate = fumarate + L-arginine. The protein operates within amino-acid biosynthesis; L-arginine biosynthesis; L-arginine from L-ornithine and carbamoyl phosphate: step 3/3. This is Argininosuccinate lyase from Natranaerobius thermophilus (strain ATCC BAA-1301 / DSM 18059 / JW/NM-WN-LF).